Reading from the N-terminus, the 966-residue chain is Polycystin-2 (966 aa).

The disordered stretch occupies residues M1 to G106. The Cytoplasmic portion of the chain corresponds to M1 to S217. Positions V30–E44 are enriched in gly residues. Over residues R46–R56 the composition is skewed to basic and acidic residues. Over residues A58–S79 the composition is skewed to low complexity. Phosphoserine occurs at positions 72 and 76. The span at E91 to E105 shows a compositional bias: acidic residues. At R135 the chain carries Omega-N-methylarginine. Positions H147–E179 are disordered. Residues V218 to M239 form a helical membrane-spanning segment. The Extracellular segment spans residues M240–A466. N297, N303, and N326 each carry an N-linked (GlcNAc...) asparagine glycan. C329 and C342 are joined by a disulfide. 2 N-linked (GlcNAc...) asparagine glycosylation sites follow: N360 and N373. A helical transmembrane segment spans residues F467–V487. Over E488–S503 the chain is Cytoplasmic. The chain crosses the membrane as a helical span at residues F504–I524. The Extracellular portion of the chain corresponds to Y525–A550. A helical membrane pass occupies residues Y551 to L571. Residue Q555 participates in cholesterol binding. Topologically, residues F572 to L595 are cytoplasmic. The chain crosses the membrane as a helical span at residues F596–F617. At G618 to E629 the chain is on the extracellular side. An intramembrane region (pore-forming) is located at residues C630–F644. Ca(2+) is bound at residue L639. The Selectivity filter motif lies at L639–D641. The Extracellular segment spans residues A645–R652. A helical membrane pass occupies residues V653–M673. At F674–A966 the chain is on the cytoplasmic side. The EF-hand domain maps to H748–E783. Ca(2+)-binding residues include D761, D763, D765, E767, and E772. The tract at residues G764 to I828 is disordered. Basic and acidic residues predominate over residues L768–S793. Over residues L794–R805 the composition is skewed to low complexity. Phosphoserine is present on residues S799, S806, S810, and S827. A linker region spans residues R801 to H820. An important for interaction with PACS1 and PACS2 region spans residues D808–G819. The stretch at G831–R870 forms a coiled coil. Residues W914 to A966 are disordered. Over residues A919 to V931 the composition is skewed to polar residues.

This sequence belongs to the polycystin family. As to quaternary structure, homotetramer. Component of the heterotetrameric polycystin channel complex with PKD1; the tetramer contains one PKD1 chain and three PKD2 chains. Interaction with PKD1 is required for ciliary localization. Isoform 1 interacts with PKD1 while isoform 3 does not. Interacts with PKD1L1. Interacts with CD2AP. Interacts with HAX1. Interacts with NEK8. Part of a complex containing AKAP5, ADCY5, ADCY6 and PDE4C. Interacts (via C-terminus) with TRPV4 (via C-terminus). Interacts (via C-terminal acidic region) with PACS1 and PACS2; these interactions retain the protein in the endoplasmic reticulum and prevent trafficking to the cell membrane. Interacts with TMEM33; enhancing its opening at the ER membrane. Interacts with TMEM120A; TMEM120A inhibits PKD2 channel activity through the physical association of PKD2 with TMEM120A. Interacts (via N-terminus) with RYR2; regulates RYR2 channel activity. In terms of processing, N-glycosylated. The four subunits in a tetramer probably differ in the extent of glycosylation; simultaneous glycosylation of all experimentally validated sites would probably create steric hindrance. Post-translationally, sumoylated by SUMO1; sumoylation regulates PKD2 membrane recycling and is necessary for intravascular pressure-induced arterial contractility. Phosphorylated. Phosphorylation is important for protein function; a mutant that lacks the N-terminal phosphorylation sites cannot complement a zebrafish pkd2-deficient mutant. PKD-mediated phosphorylation at the C-terminus regulates its function in the release of Ca(2+) stores from the endoplasmic reticulum. Phosphorylation at Ser-810 regulates PKD2 trafficking. Phosphorylation at Ser-72 is required for PKD2 trafficking to or retention at the lateral plasma membrane. Phosphorylation at Ser-799, Ser-810 and Ser-827 regulates PKD2 channel activity. In terms of tissue distribution, detected in kidney epithelium (at protein level). Highly expressed on basolateral membranes in distal convoluted tubules and medullary thick ascending limbs of Henle. Detected at much lower levels in cortical and medullary collecting tubules, and not detected in the glomerular tuft, in thin limbs of Henle, interstitium and blood vessels (at protein level). Expressed in mesenchymally derived structures in the developing embryo at day 12.5. Isoform 1 is predominantly expressed in kidney at all developmental stages with high levels also detected in lung. Isoform 3 shows highest expression in brain with lower expression in kidney and lung, low levels in thymus and is hardly detectable in liver.

The protein resides in the cell projection. The protein localises to the cilium membrane. It localises to the cell membrane. Its subcellular location is the basolateral cell membrane. It is found in the cytoplasmic vesicle membrane. The protein resides in the endoplasmic reticulum membrane. The protein localises to the golgi apparatus. It localises to the vesicle. Its subcellular location is the secreted. It is found in the extracellular exosome. It carries out the reaction K(+)(in) = K(+)(out). The enzyme catalyses Na(+)(in) = Na(+)(out). The catalysed reaction is Ca(2+)(in) = Ca(2+)(out). Channel activity is regulated by phosphorylation. The channel is activated by increased cytoplasmic Ca(2+) (in the uM range) and by membrane depolarization. TMEM120A inhibits the channel activity of PKD2, and mediates mechanosensitivity of the PKD2-TMEM120A channel complex. At the endoplasmic reticulum membrane (ER), TMEM33 enhances its channel activity. PKD1/ PKD2 complex on the plasma membrane is activated by PKD1 N-terminus. Functionally, forms a nonselective cation channel. Can function as a homotetrameric ion channel or can form heteromer with PKD1. Displays distinct function depending on its subcellular localization and regulation by its binding partners. Functions as a cation channel, with a preference for monovalent cations over divalent cations that allows K(+), Na(+) and Ca(2+) influx, with low selectivity for Ca(2+). Involved in fluid-flow mechanosensation by the primary cilium in renal epithelium. In the endoplasmic reticulum, likely functions as a K(+) channel to facilitate Ca(2+) release. The heterotetrameric PKD1/PKD2 channel has higher Ca(2+) permeability than homomeric PKD2 channel and acts as a primarily Ca(2+)-permeable channel. PKD1 and PKD2 may function through a common signaling pathway that is necessary to maintain the normal, differentiated state of renal tubule cells. Interacts with and acts as a regulator of a number of other channels, such as TRPV4, TRPC1, IP3R, RYR2, ultimately further affecting intracellular signaling, to modulate intracellular Ca(2+) signaling. Together with TRPV4, forms mechano- and thermosensitive channels in cilium. In cardiomyocytes, PKD2 modulates Ca(2+) release from stimulated RYR2 receptors through direct association. Also involved in left-right axis specification via its role in sensing nodal flow; forms a complex with PKD1L1 in cilia to facilitate flow detection in left-right patterning. Acts as a regulator of cilium length together with PKD1. Mediates systemic blood pressure and contributes to the myogenic response in cerebral arteries though vasoconstriction. The protein is Polycystin-2 of Mus musculus (Mouse).